The chain runs to 440 residues: Probable secretory pathway GDP dissociation inhibitor 1 (440 aa).

It belongs to the Rab GDI family.

This chain is Probable secretory pathway GDP dissociation inhibitor 1 (gdi1), found in Schizosaccharomyces pombe (strain 972 / ATCC 24843) (Fission yeast).